We begin with the raw amino-acid sequence, 129 residues long: Lysozyme C, milk isozyme (129 aa).

The region spanning 1–129 is the C-type lysozyme domain; that stretch reads KVFSKCELAH…LSEYLASCNL (129 aa). Disulfide bonds link C6–C127, C30–C115, C65–C80, and C76–C94. Active-site residues include E35 and D53. 5 residues coordinate Ca(2+): K82, D85, N87, D90, and D91.

Belongs to the glycosyl hydrolase 22 family. Monomer. The cofactor is Ca(2+).

The enzyme catalyses Hydrolysis of (1-&gt;4)-beta-linkages between N-acetylmuramic acid and N-acetyl-D-glucosamine residues in a peptidoglycan and between N-acetyl-D-glucosamine residues in chitodextrins.. Lysozymes have primarily a bacteriolytic function; those in tissues and body fluids are associated with the monocyte-macrophage system and enhance the activity of immunoagents. This Equus caballus (Horse) protein is Lysozyme C, milk isozyme (LYZ).